The sequence spans 115 residues: Large ribosomal subunit protein bL20 (115 aa).

Belongs to the bacterial ribosomal protein bL20 family.

In terms of biological role, binds directly to 23S ribosomal RNA and is necessary for the in vitro assembly process of the 50S ribosomal subunit. It is not involved in the protein synthesizing functions of that subunit. The protein is Large ribosomal subunit protein bL20 of Bdellovibrio bacteriovorus (strain ATCC 15356 / DSM 50701 / NCIMB 9529 / HD100).